Here is a 179-residue protein sequence, read N- to C-terminus: ATP synthase subunit delta (179 aa).

It belongs to the ATPase delta chain family. As to quaternary structure, F-type ATPases have 2 components, F(1) - the catalytic core - and F(0) - the membrane proton channel. F(1) has five subunits: alpha(3), beta(3), gamma(1), delta(1), epsilon(1). F(0) has three main subunits: a(1), b(2) and c(10-14). The alpha and beta chains form an alternating ring which encloses part of the gamma chain. F(1) is attached to F(0) by a central stalk formed by the gamma and epsilon chains, while a peripheral stalk is formed by the delta and b chains.

The protein resides in the cell membrane. F(1)F(0) ATP synthase produces ATP from ADP in the presence of a proton or sodium gradient. F-type ATPases consist of two structural domains, F(1) containing the extramembraneous catalytic core and F(0) containing the membrane proton channel, linked together by a central stalk and a peripheral stalk. During catalysis, ATP synthesis in the catalytic domain of F(1) is coupled via a rotary mechanism of the central stalk subunits to proton translocation. Its function is as follows. This protein is part of the stalk that links CF(0) to CF(1). It either transmits conformational changes from CF(0) to CF(1) or is implicated in proton conduction. The sequence is that of ATP synthase subunit delta from Clostridium botulinum (strain 657 / Type Ba4).